Consider the following 517-residue polypeptide: GMP synthase [glutamine-hydrolyzing] (517 aa).

Residues 9–199 (RILILDFGSQ…VLNVCGCEGL (191 aa)) enclose the Glutamine amidotransferase type-1 domain. Residue Cys86 is the Nucleophile of the active site. Catalysis depends on residues His173 and Glu175. Positions 200–392 (WTSASIIEDA…LGLPYNMLYR (193 aa)) constitute a GMPS ATP-PPase domain. 227 to 233 (SGGVDSS) contributes to the ATP binding site.

In terms of assembly, homodimer.

The catalysed reaction is XMP + L-glutamine + ATP + H2O = GMP + L-glutamate + AMP + diphosphate + 2 H(+). It participates in purine metabolism; GMP biosynthesis; GMP from XMP (L-Gln route): step 1/1. Its function is as follows. Catalyzes the synthesis of GMP from XMP. The polypeptide is GMP synthase [glutamine-hydrolyzing] (Aliivibrio fischeri (strain MJ11) (Vibrio fischeri)).